A 314-amino-acid chain; its full sequence is Very long chain fatty acid elongase 4 (314 aa).

Asn-20 is a glycosylation site (N-linked (GlcNAc...) asparagine). The next 7 membrane-spanning stretches (helical) occupy residues 42–62, 78–98, 127–147, 165–185, 188–208, 217–237, and 247–267; these read LMQS…FVWL, VLII…RELF, ALWW…FFIL, MFTL…FFGA, NSFI…GPWI, YLTM…ALSL, and MHWA…NFYI. The segment at 275–314 is disordered; that stretch reads KPKAGKTAMNGISANGVSKSEKQLMIENGKKQKNGKAKGD. Basic and acidic residues predominate over residues 293–304; sequence KSEKQLMIENGK. A compositionally biased stretch (basic residues) spans 305 to 314; the sequence is KQKNGKAKGD. The Di-lysine motif signature appears at 310 to 314; it reads KAKGD.

This sequence belongs to the ELO family. ELOVL4 subfamily. In terms of assembly, oligomer. In terms of processing, N-glycosylated. In terms of tissue distribution, expressed in the retina and at much lower level in the brain. Ubiquitous, highest expression in thymus, followed by testis, small intestine, ovary, and prostate. Little or no expression in heart, lung, liver, or leukocates.

Its subcellular location is the endoplasmic reticulum membrane. The catalysed reaction is a very-long-chain acyl-CoA + malonyl-CoA + H(+) = a very-long-chain 3-oxoacyl-CoA + CO2 + CoA. The enzyme catalyses tetracosanoyl-CoA + malonyl-CoA + H(+) = 3-oxohexacosanoyl-CoA + CO2 + CoA. It carries out the reaction hexacosanoyl-CoA + malonyl-CoA + H(+) = 3-oxooctacosanyol-CoA + CO2 + CoA. It catalyses the reaction octacosanoyl-CoA + malonyl-CoA + H(+) = 3-oxo-triacontanoyl-CoA + CO2 + CoA. The catalysed reaction is triacontanoyl-CoA + malonyl-CoA + H(+) = 3-oxo-dotriacontanoyl-CoA + CO2 + CoA. The enzyme catalyses (19Z,22Z,25Z,28Z,31Z)-tetratriacontapentaenoyl-CoA + malonyl-CoA + H(+) = 3-oxo-(21Z,24Z,27Z,30Z,33Z)-hexatriacontapentaenoyl-CoA + CO2 + CoA. It carries out the reaction (4Z,7Z,10Z,13Z,16Z,19Z)-docosahexaenoyl-CoA + malonyl-CoA + H(+) = 3-oxo-(6Z,9Z,12Z,15Z,18Z,21Z)-tetracosahexaenoyl-CoA + CO2 + CoA. It catalyses the reaction (7Z,10Z,13Z,16Z)-docosatetraenoyl-CoA + malonyl-CoA + H(+) = (9Z,12Z,15Z,18Z)-3-oxotetracosatetraenoyl-CoA + CO2 + CoA. The catalysed reaction is (11Z,14Z,17Z,20Z,23Z)-hexacosapentaenoyl-CoA + malonyl-CoA + H(+) = 3-oxo-(13Z,16Z,19Z,22Z,25Z)-octacosapentaenoyl-CoA + CO2 + CoA. The enzyme catalyses (13Z,16Z,19Z,22Z,25Z)-octacosapentaenoyl-CoA + malonyl-CoA + H(+) = 3-oxo-(15Z,18Z,21Z,24Z,27Z)-triacontapentaenoyl-CoA + CO2 + CoA. It carries out the reaction (15Z,18Z,21Z,24Z,27Z)-triacontapentaenoyl-CoA + malonyl-CoA + H(+) = 3-oxo-(17Z,20Z,23Z,26Z,29Z)-dotriacontapentaenoyl-CoA + CO2 + CoA. It catalyses the reaction (17Z,20Z,23Z,26Z,29Z)-dotriacontapentaenoyl-CoA + malonyl-CoA + H(+) = 3-oxo-(19Z,22Z,25Z,28Z,31Z)-tetratriacontapentaenoyl-CoA + CO2 + CoA. The catalysed reaction is (21Z,24Z,27Z,30Z,33Z)-hexatriacontapentaenoyl-CoA + malonyl-CoA + H(+) = 3-oxo-(23Z,26Z,29Z,32Z,35Z)-octatriacontapentaenoyl-CoA + CO2 + CoA. The enzyme catalyses (11Z,14Z,17Z,20Z)-hexacosatetraenoyl-CoA + malonyl-CoA + H(+) = (13Z,16Z,19Z,22Z)-3-oxooctacosatetraenoyl-CoA + CO2 + CoA. It carries out the reaction (13Z,16Z,19Z,22Z)-octacosatetraenoyl-CoA + malonyl-CoA + H(+) = 3-oxo-(15Z,18Z,21Z,24Z)-triacontatetraenoyl-CoA + CO2 + CoA. It catalyses the reaction (15Z,18Z,21Z,24Z)-triacontatetraenoyl-CoA + malonyl-CoA + H(+) = 3-oxo-(17Z,20Z,23Z,26Z)-dotriacontatetraenoyl-CoA + CO2 + CoA. The catalysed reaction is (17Z,20Z,23Z,26Z)-dotriacontatetraenoyl-CoA + malonyl-CoA + H(+) = 3-oxo-(19Z,22Z,25Z,28Z)-tetratriacontatetraenoyl-CoA + CO2 + CoA. The enzyme catalyses (19Z,22Z,25Z,28Z)-tetratriacontatetraenoyl-CoA + malonyl-CoA + H(+) = 3-oxo-(21Z,24Z,27Z,30Z)-hexatriacontatetraenoyl-CoA + CO2 + CoA. It carries out the reaction (21Z,24Z,27Z,30Z)-hexatriacontatetraenoyl-CoA + malonyl-CoA + H(+) = 3-oxo-(23Z,26Z,29Z,32Z)-octatriacontatetraenoyl-CoA + CO2 + CoA. It catalyses the reaction (6Z,9Z,12Z,15Z,18Z,21Z)-tetracosahexaenoyl-CoA + malonyl-CoA + H(+) = 3-oxo-(8Z,11Z,14Z,17Z,20Z,23Z)-hexacosahexaenoyl-CoA + CO2 + CoA. The catalysed reaction is (8Z,11Z,14Z,17Z,20Z,23Z)-hexacosahexaenoyl-CoA + malonyl-CoA + H(+) = 3-oxo-(10Z,13Z,16Z,19Z,22Z,25Z)-octacosahexaenoyl-CoA + CO2 + CoA. The enzyme catalyses (10Z,13Z,16Z,19Z,22Z,25Z)-octacosahexaenoyl-CoA + malonyl-CoA + H(+) = 3-oxo-(12Z,15Z,18Z,21Z,24Z,27Z)-triacontahexaenoyl-CoA + CO2 + CoA. It carries out the reaction (12Z,15Z,18Z,21Z,24Z,27Z)-triacontahexaenoyl-CoA + malonyl-CoA + H(+) = 3-oxo-(14Z,17Z,20Z,23Z,26Z,29Z)-dotriacontahexaenoyl-CoA + CO2 + CoA. It catalyses the reaction (14Z,17Z,20Z,23Z,26Z,29Z)-dotriacontahexaenoyl-CoA + malonyl-CoA + H(+) = 3-oxo-(16Z,19Z,22Z,25Z,28Z,31Z)-tetratriacontahexaenoyl-CoA + CO2 + CoA. The catalysed reaction is (16Z,19Z,22Z,25Z,28Z,31Z)-tetratriacontahexaenoyl-CoA + malonyl-CoA + H(+) = 3-oxo-(18Z,21Z,24Z,27Z,30Z,33Z)-hexatriacontahexaenoyl-CoA + CO2 + CoA. The enzyme catalyses (9Z,12Z,15Z,18Z,21Z)-tetracosapentaenoyl-CoA + malonyl-CoA + H(+) = 3-oxo-(11Z,14Z,17Z,20Z,23Z)-hexacosapentaenoyl-CoA + CO2 + CoA. It participates in lipid metabolism; fatty acid biosynthesis. Catalyzes the first and rate-limiting reaction of the four reactions that constitute the long-chain fatty acids elongation cycle. This endoplasmic reticulum-bound enzymatic process allows the addition of 2 carbons to the chain of long- and very long-chain fatty acids (VLCFAs) per cycle. Condensing enzyme that catalyzes the synthesis of very long chain saturated (VLC-SFA) and polyunsaturated (PUFA) fatty acids that are involved in multiple biological processes as precursors of membrane lipids and lipid mediators. May play a critical role in early brain and skin development. In Homo sapiens (Human), this protein is Very long chain fatty acid elongase 4.